Consider the following 101-residue polypeptide: Small ribosomal subunit protein uS14 (101 aa).

The protein belongs to the universal ribosomal protein uS14 family. As to quaternary structure, part of the 30S ribosomal subunit. Contacts proteins S3 and S10.

In terms of biological role, binds 16S rRNA, required for the assembly of 30S particles and may also be responsible for determining the conformation of the 16S rRNA at the A site. The sequence is that of Small ribosomal subunit protein uS14 from Actinobacillus pleuropneumoniae serotype 5b (strain L20).